Here is a 193-residue protein sequence, read N- to C-terminus: Probable DNA-directed RNA polymerase subunit delta (193 aa).

Residues 14–83 form the HTH HARE-type domain; the sequence is LSMIEVARAI…GDNKWGLRSW (70 aa). Composition is skewed to acidic residues over residues 119–133 and 143–193; these read EDAI…EDEN and YDND…ETND. The interval 119–193 is disordered; that stretch reads EDAIDYNDDD…DDDYEDETND (75 aa).

Belongs to the RpoE family. In terms of assembly, RNAP is composed of a core of 2 alpha, a beta and a beta' subunits. The core is associated with a delta subunit and one of several sigma factors.

Its function is as follows. Participates in both the initiation and recycling phases of transcription. In the presence of the delta subunit, RNAP displays an increased specificity of transcription, a decreased affinity for nucleic acids, and an increased efficiency of RNA synthesis because of enhanced recycling. This chain is Probable DNA-directed RNA polymerase subunit delta, found in Streptococcus thermophilus (strain CNRZ 1066).